A 359-amino-acid chain; its full sequence is Short chain dehydrogenase resG (359 aa).

The NADP(+) site is built by K87, D110, N137, Y237, and K241. Catalysis depends on Y237, which acts as the Proton donor. K241 serves as the catalytic Lowers pKa of active site Tyr.

It belongs to the short-chain dehydrogenases/reductases (SDR) family.

It functions in the pathway antifungal biosynthesis. In terms of biological role, short chain dehydrogenase; part of the gene cluster that mediates the biosynthesis of the tetrahydropyranyl antifungal agent restricticin that acts as an inhibitor of CYP51 and blocks the ergosterol biosynthesis. The highly reducing polyketide synthase resH, the short chain dehydrogenase resG, the cyclase resF, the FAD-dependent monooxygenase resA and the enoylreductase resD are required to generate the first stable intermediate desmethylrestrictinol. ResH with resD biosynthesize the first polyketide chain intermediate that is reduced by resG, followed by epoxidation by resA before 6-endo cyclization via epoxide opening by resF leads to desmethylrestrictinol. The methyltransferase resE then catalyzes the C4 O-methylation of desmethylrestrictinol to produce restrictinol, and the nonribosomal peptide synthetase resC catalyzes the C3 esterification of restrictinol with glycine that leads to restricticin. The chain is Short chain dehydrogenase resG from Aspergillus sclerotiorum.